The primary structure comprises 594 residues: Aspartate--tRNA(Asp/Asn) ligase (594 aa).

Glu-173 is an L-aspartate binding site. The tract at residues 197–200 is aspartate; that stretch reads QLFK. Arg-219 lines the L-aspartate pocket. ATP is bound by residues 219-221 and Gln-228; that span reads RDE. An L-aspartate-binding site is contributed by His-451. Glu-485 contributes to the ATP binding site. Position 492 (Arg-492) interacts with L-aspartate. An ATP-binding site is contributed by 537-540; it reads GWDR. Positions 566 to 594 are disordered; sequence PLTDAPAPITAQQRKESGIDAQPKRVQQA.

The protein belongs to the class-II aminoacyl-tRNA synthetase family. Type 1 subfamily. Homodimer.

It is found in the cytoplasm. The enzyme catalyses tRNA(Asx) + L-aspartate + ATP = L-aspartyl-tRNA(Asx) + AMP + diphosphate. Functionally, aspartyl-tRNA synthetase with relaxed tRNA specificity since it is able to aspartylate not only its cognate tRNA(Asp) but also tRNA(Asn). Reaction proceeds in two steps: L-aspartate is first activated by ATP to form Asp-AMP and then transferred to the acceptor end of tRNA(Asp/Asn). The chain is Aspartate--tRNA(Asp/Asn) ligase from Mycobacterium tuberculosis (strain CDC 1551 / Oshkosh).